The following is a 55-amino-acid chain: ATP synthase F(0) complex subunit 8 (55 aa).

Residues 10 to 32 traverse the membrane as a helical segment; it reads FFIMLASWLTFSLIIQPKLLTFV.

The protein belongs to the ATPase protein 8 family. In terms of assembly, component of the ATP synthase complex composed at least of ATP5F1A/subunit alpha, ATP5F1B/subunit beta, ATP5MC1/subunit c (homooctomer), MT-ATP6/subunit a, MT-ATP8/subunit 8, ATP5ME/subunit e, ATP5MF/subunit f, ATP5MG/subunit g, ATP5MK/subunit k, ATP5MJ/subunit j, ATP5F1C/subunit gamma, ATP5F1D/subunit delta, ATP5F1E/subunit epsilon, ATP5PF/subunit F6, ATP5PB/subunit b, ATP5PD/subunit d, ATP5PO/subunit OSCP. ATP synthase complex consists of a soluble F(1) head domain (subunits alpha(3) and beta(3)) - the catalytic core - and a membrane F(0) domain - the membrane proton channel (subunits c, a, 8, e, f, g, k and j). These two domains are linked by a central stalk (subunits gamma, delta, and epsilon) rotating inside the F1 region and a stationary peripheral stalk (subunits F6, b, d, and OSCP).

Its subcellular location is the mitochondrion membrane. Its function is as follows. Subunit 8, of the mitochondrial membrane ATP synthase complex (F(1)F(0) ATP synthase or Complex V) that produces ATP from ADP in the presence of a proton gradient across the membrane which is generated by electron transport complexes of the respiratory chain. ATP synthase complex consist of a soluble F(1) head domain - the catalytic core - and a membrane F(1) domain - the membrane proton channel. These two domains are linked by a central stalk rotating inside the F(1) region and a stationary peripheral stalk. During catalysis, ATP synthesis in the catalytic domain of F(1) is coupled via a rotary mechanism of the central stalk subunits to proton translocation. In vivo, can only synthesize ATP although its ATP hydrolase activity can be activated artificially in vitro. Part of the complex F(0) domain. This Loxigilla noctis (Lesser Antillean bullfinch) protein is ATP synthase F(0) complex subunit 8.